The primary structure comprises 90 residues: Small ribosomal subunit protein uS15 (90 aa).

Belongs to the universal ribosomal protein uS15 family. Part of the 30S ribosomal subunit. Forms a bridge to the 50S subunit in the 70S ribosome, contacting the 23S rRNA.

In terms of biological role, one of the primary rRNA binding proteins, it binds directly to 16S rRNA where it helps nucleate assembly of the platform of the 30S subunit by binding and bridging several RNA helices of the 16S rRNA. Forms an intersubunit bridge (bridge B4) with the 23S rRNA of the 50S subunit in the ribosome. The sequence is that of Small ribosomal subunit protein uS15 from Herpetosiphon aurantiacus (strain ATCC 23779 / DSM 785 / 114-95).